Consider the following 466-residue polypeptide: Cysteine--tRNA ligase (466 aa).

A Zn(2+)-binding site is contributed by Cys-27. The 'HIGH' region signature appears at 29–39; sequence PTVYNYIHIGN. 3 residues coordinate Zn(2+): Cys-207, His-232, and Glu-236. Residues 264-268 carry the 'KMSKS' region motif; it reads KMSKS. An ATP-binding site is contributed by Lys-267.

It belongs to the class-I aminoacyl-tRNA synthetase family. In terms of assembly, monomer. It depends on Zn(2+) as a cofactor.

The protein localises to the cytoplasm. It carries out the reaction tRNA(Cys) + L-cysteine + ATP = L-cysteinyl-tRNA(Cys) + AMP + diphosphate. The sequence is that of Cysteine--tRNA ligase from Thermoanaerobacter pseudethanolicus (strain ATCC 33223 / 39E) (Clostridium thermohydrosulfuricum).